The following is a 485-amino-acid chain: Telomeric DNA-binding factor trf1 (485 aa).

Basic and acidic residues predominate over residues 1–20 (MSKRSLDPSDDFKGQKRLAI). Residues 1–23 (MSKRSLDPSDDFKGQKRLAIDPE) are disordered. Residues 400–457 (RRVANRRSWTKEEEEALLDGLDLVKGPRWSQILELYGPGGKKSEVLKYRNQVQLKDKA) enclose the HTH myb-type domain. Positions 428–453 (WSQILELYGPGGKKSEVLKYRNQVQL) form a DNA-binding region, H-T-H motif.

As to quaternary structure, homodimer.

The protein localises to the nucleus. Binds the telomeric double-stranded TTACAGG repeat and regulates telomere length. The polypeptide is Telomeric DNA-binding factor trf1 (trf1) (Schizosaccharomyces pombe (strain 972 / ATCC 24843) (Fission yeast)).